Consider the following 291-residue polypeptide: MERNSSLWKNLIDEHPVCTTWKQEAEGAIYHLASILFVVGFMGGSGFFGLLYVFSLLGLGFLCSAVWAWVDVCAADIFSWNFVLFVICFMQFVHIAYQVRSITFAREFQVLYSSLFQPLGISLPVFRTIALSSEVVTLEKEHCYAMQGKTSIDKLSLLVSGRIRVTVDGEFLHYIFPLQFLDSPEWDSLRPTEEGIFQVTLTAETDCRYVSWRRKKLYLLFAQHRYISRLFSVLIGSDIADKLYALNDRVYIGKRYHYDIRLPNFYQMSTPEIRRSPLTQHFQNSRRYCDK.

A glycan (N-linked (GlcNAc...) asparagine) is linked at N4. The next 3 helical transmembrane spans lie at 27–44, 48–70, and 77–99; these read GAIY…FMGG, FGLL…WAWV, and IFSW…AYQV.

This sequence belongs to the popeye family. In terms of tissue distribution, expressed predominantly in skeletal muscle (at protein level). Also detected in heart.

Its subcellular location is the membrane. Functionally, may play a role in the maintenance of heart function mediated, at least in part, through cAMP-binding. May play a role in the regulation of KCNK2/TREK-1-mediated current amplitude. In Homo sapiens (Human), this protein is Popeye domain-containing protein 3 (POPDC3).